The chain runs to 156 residues: Aspartate 1-decarboxylase (156 aa).

The active-site Schiff-base intermediate with substrate; via pyruvic acid is the Ser-29. Pyruvic acid (Ser) is present on Ser-29. Residue Thr-61 coordinates substrate. The active-site Proton donor is the Tyr-62. 77-79 (GAA) contributes to the substrate binding site.

The protein belongs to the PanD family. As to quaternary structure, heterooctamer of four alpha and four beta subunits. Requires pyruvate as cofactor. In terms of processing, is synthesized initially as an inactive proenzyme, which is activated by self-cleavage at a specific serine bond to produce a beta-subunit with a hydroxyl group at its C-terminus and an alpha-subunit with a pyruvoyl group at its N-terminus.

The protein resides in the cytoplasm. It catalyses the reaction L-aspartate + H(+) = beta-alanine + CO2. Its pathway is cofactor biosynthesis; (R)-pantothenate biosynthesis; beta-alanine from L-aspartate: step 1/1. Catalyzes the pyruvoyl-dependent decarboxylation of aspartate to produce beta-alanine. In Rhodopirellula baltica (strain DSM 10527 / NCIMB 13988 / SH1), this protein is Aspartate 1-decarboxylase.